The chain runs to 202 residues: Recoverin (202 aa).

The N-myristoyl glycine moiety is linked to residue glycine 2. A Cysteine sulfenic acid (-SOH) modification is found at cysteine 39. 4 EF-hand domains span residues 41-59 (SGRI…FFPD), 61-96 (DPKA…TTAG), 97-132 (KPTQ…IFKM), and 147-182 (TPEK…NKEI). Residues aspartate 74, asparagine 76, aspartate 78, threonine 80, glutamate 85, aspartate 110, aspartate 112, asparagine 114, threonine 116, and glutamate 121 each coordinate Ca(2+). Residues 189–192 (EPQK) are interaction with GRK1.

This sequence belongs to the recoverin family. In terms of assembly, homodimer; disulfide-linked. Homodimerization is caused by prolonged intense illumination. May form a complex composed of RHO, GRK1 and RCVRN in a Ca(2+)-dependent manner; RCVRN prevents the interaction between GRK1 and RHO. Interacts (via C-terminus) with GRK1 (via N-terminus); the interaction is Ca(2+)-dependent. The N-terminal glycine is linked to one of four different types of acyl groups. The most abundant is myristoleate (14:1), but 14:0, 14:2, and 12:0 acyl residues are also present. The Ca(2+) induced exposure of the myristoyl group, known as the calcium-myristoyl switch, promotes RCVRN binding to the photoreceptor cell membranes only when intracellular Ca(2+) concentration is high. Post-translationally, oxidation on Cys-39 occurs in response to prolonged intense illumination and results in the formation of disulfide homodimers, and to a lesser extent disulfide-linked heterodimers. As to expression, expressed in rod photoreceptors in the retina (at protein level).

It localises to the photoreceptor inner segment. The protein resides in the cell projection. Its subcellular location is the cilium. The protein localises to the photoreceptor outer segment. It is found in the photoreceptor outer segment membrane. It localises to the perikaryon. Acts as a calcium sensor and regulates phototransduction of cone and rod photoreceptor cells. Modulates light sensitivity of cone photoreceptor in dark and dim conditions. In response to high Ca(2+) levels induced by low light levels, prolongs RHO/rhodopsin activation in rod photoreceptor cells by binding to and inhibiting GRK1-mediated phosphorylation of RHO/rhodopsin. Plays a role in scotopic vision/enhances vision in dim light by enhancing signal transfer between rod photoreceptors and rod bipolar cells. Improves rod photoreceptor sensitivity in dim light and mediates response of rod photoreceptors to facilitate detection of change and motion in bright light. This Mus musculus (Mouse) protein is Recoverin (Rcvrn).